Consider the following 123-residue polypeptide: Small ribosomal subunit protein uS12 (123 aa).

Residue Asp-89 is modified to 3-methylthioaspartic acid.

This sequence belongs to the universal ribosomal protein uS12 family. In terms of assembly, part of the 30S ribosomal subunit. Contacts proteins S8 and S17. May interact with IF1 in the 30S initiation complex.

In terms of biological role, with S4 and S5 plays an important role in translational accuracy. Functionally, interacts with and stabilizes bases of the 16S rRNA that are involved in tRNA selection in the A site and with the mRNA backbone. Located at the interface of the 30S and 50S subunits, it traverses the body of the 30S subunit contacting proteins on the other side and probably holding the rRNA structure together. The combined cluster of proteins S8, S12 and S17 appears to hold together the shoulder and platform of the 30S subunit. The chain is Small ribosomal subunit protein uS12 from Myxococcus xanthus.